The primary structure comprises 227 residues: Phosphoglycolate phosphatase (227 aa).

Residue D11 is the Nucleophile of the active site. 3 residues coordinate Mg(2+): D11, D13, and D176.

This sequence belongs to the HAD-like hydrolase superfamily. CbbY/CbbZ/Gph/YieH family. Mg(2+) is required as a cofactor.

It catalyses the reaction 2-phosphoglycolate + H2O = glycolate + phosphate. Its pathway is organic acid metabolism; glycolate biosynthesis; glycolate from 2-phosphoglycolate: step 1/1. Its function is as follows. Specifically catalyzes the dephosphorylation of 2-phosphoglycolate. Is involved in the dissimilation of the intracellular 2-phosphoglycolate formed during the DNA repair of 3'-phosphoglycolate ends, a major class of DNA lesions induced by oxidative stress. This is Phosphoglycolate phosphatase from Aliivibrio fischeri (strain ATCC 700601 / ES114) (Vibrio fischeri).